The following is a 156-amino-acid chain: RNA polymerase sigma factor SigS (156 aa).

The short motif at 29 to 44 (EYYQLLLIKMWQLSQI) is the Polymerase core binding element. Positions 126-145 (QFEIAEIMSLSLSTIKLIKM) form a DNA-binding region, H-T-H motif.

Belongs to the sigma-70 factor family.

Its function is as follows. Sigma factors are initiation factors that promote the attachment of RNA polymerase to specific initiation sites and are then released. Sigma-S contributes to the protection against external stress, thus playing a role in cellular fitness and survival. This chain is RNA polymerase sigma factor SigS (sigS), found in Staphylococcus aureus (strain NCTC 8325 / PS 47).